We begin with the raw amino-acid sequence, 126 residues long: Fluoride-specific ion channel FluC (126 aa).

Transmembrane regions (helical) follow at residues 5–25, 36–56, 69–89, and 99–119; these read GFVAVGVGAAVGAWLRWFFSV, YGTLASNLVGGYLIGLAVAFF, LAVTGFLGGLTTFSTFSSEVI, and WAMLHLAMHLGGSLLLTAFGI. Glycine 76 and threonine 79 together coordinate Na(+).

It belongs to the fluoride channel Fluc/FEX (TC 1.A.43) family.

Its subcellular location is the cell inner membrane. It catalyses the reaction fluoride(in) = fluoride(out). Na(+) is not transported, but it plays an essential structural role and its presence is essential for fluoride channel function. In terms of biological role, fluoride-specific ion channel. Important for reducing fluoride concentration in the cell, thus reducing its toxicity. The sequence is that of Fluoride-specific ion channel FluC from Cupriavidus metallidurans (strain ATCC 43123 / DSM 2839 / NBRC 102507 / CH34) (Ralstonia metallidurans).